We begin with the raw amino-acid sequence, 288 residues long: 33 kDa chaperonin (288 aa).

2 cysteine pairs are disulfide-bonded: Cys-235–Cys-237 and Cys-268–Cys-271.

Belongs to the HSP33 family. Post-translationally, under oxidizing conditions two disulfide bonds are formed involving the reactive cysteines. Under reducing conditions zinc is bound to the reactive cysteines and the protein is inactive.

Its subcellular location is the cytoplasm. In terms of biological role, redox regulated molecular chaperone. Protects both thermally unfolding and oxidatively damaged proteins from irreversible aggregation. Plays an important role in the bacterial defense system toward oxidative stress. The sequence is that of 33 kDa chaperonin from Streptococcus thermophilus (strain ATCC BAA-491 / LMD-9).